The sequence spans 206 residues: Protein GrpE (206 aa).

A compositionally biased stretch (basic and acidic residues) spans methionine 1 to valine 18. A disordered region spans residues methionine 1–alanine 21.

It belongs to the GrpE family. As to quaternary structure, homodimer.

It is found in the cytoplasm. In terms of biological role, participates actively in the response to hyperosmotic and heat shock by preventing the aggregation of stress-denatured proteins, in association with DnaK and GrpE. It is the nucleotide exchange factor for DnaK and may function as a thermosensor. Unfolded proteins bind initially to DnaJ; upon interaction with the DnaJ-bound protein, DnaK hydrolyzes its bound ATP, resulting in the formation of a stable complex. GrpE releases ADP from DnaK; ATP binding to DnaK triggers the release of the substrate protein, thus completing the reaction cycle. Several rounds of ATP-dependent interactions between DnaJ, DnaK and GrpE are required for fully efficient folding. In Photobacterium profundum (strain SS9), this protein is Protein GrpE.